A 444-amino-acid polypeptide reads, in one-letter code: Tubulin beta-8 chain (444 aa).

The short motif at 1 to 4 (MREI) is the MREI motif element. The GTP site is built by Gln11, Glu69, Ser138, Gly142, Thr143, and Gly144. Glu69 provides a ligand contact to Mg(2+). Position 172 is a phosphoserine; by CDK1 (Ser172). GTP is bound by residues Asn204 and Asn226. A disordered region spans residues 423–444 (QQYQDATAEEEEDEEYAEEEVA). Residues 429–444 (TAEEEEDEEYAEEEVA) are compositionally biased toward acidic residues. A 5-glutamyl polyglutamate modification is found at Glu436.

Belongs to the tubulin family. Dimer of alpha and beta chains. A typical microtubule is a hollow water-filled tube with an outer diameter of 25 nm and an inner diameter of 15 nM. Alpha-beta heterodimers associate head-to-tail to form protofilaments running lengthwise along the microtubule wall with the beta-tubulin subunit facing the microtubule plus end conferring a structural polarity. Microtubules usually have 13 protofilaments but different protofilament numbers can be found in some organisms and specialized cells. The cofactor is Mg(2+). In terms of processing, some glutamate residues at the C-terminus are polyglutamylated, resulting in polyglutamate chains on the gamma-carboxyl group. Polyglutamylation plays a key role in microtubule severing by spastin (SPAST). SPAST preferentially recognizes and acts on microtubules decorated with short polyglutamate tails: severing activity by SPAST increases as the number of glutamates per tubulin rises from one to eight, but decreases beyond this glutamylation threshold. Glutamylation is also involved in cilia motility. Post-translationally, some glutamate residues at the C-terminus are monoglycylated but not polyglycylated due to the absence of functional TTLL10 in human. Monoglycylation is mainly limited to tubulin incorporated into cilia and flagella axonemes, which is required for their stability and maintenance. Flagella glycylation controls sperm motility. Both polyglutamylation and monoglycylation can coexist on the same protein on adjacent residues, and lowering glycylation levels increases polyglutamylation, and reciprocally. Phosphorylated on Ser-172 by CDK1 during the cell cycle, from metaphase to telophase, but not in interphase. This phosphorylation inhibits tubulin incorporation into microtubules. Expressed at a high level in oocytes, at different stages of development.

The protein localises to the cytoplasm. It localises to the cytoskeleton. The protein resides in the spindle. In terms of biological role, tubulin is the major constituent of microtubules, a cylinder consisting of laterally associated linear protofilaments composed of alpha- and beta-tubulin heterodimers. Microtubules grow by the addition of GTP-tubulin dimers to the microtubule end, where a stabilizing cap forms. Below the cap, tubulin dimers are in GDP-bound state, owing to GTPase activity of alpha-tubulin. TUBB8 has a key role in meiotic spindle assembly and oocyte maturation. This Homo sapiens (Human) protein is Tubulin beta-8 chain.